The following is a 199-amino-acid chain: NAD(P)H dehydrogenase (quinone) (199 aa).

Positions 4-190 (VLVLYYSAYG…DGARFQGKRV (187 aa)) constitute a Flavodoxin-like domain. Residues 10–15 (SAYGHM) and 78–80 (TRY) contribute to the FMN site. Tyr-12 contributes to the NAD(+) binding site. Trp-98 contacts substrate. FMN-binding positions include 113-119 (STATQHG) and His-134. The disordered stretch occupies residues 157–185 (GGAPYGMTTTADGDGSRQPSEQELDGARF). The segment covering 163 to 177 (MTTTADGDGSRQPSE) has biased composition (polar residues).

Belongs to the WrbA family. Requires FMN as cofactor.

The catalysed reaction is a quinone + NADH + H(+) = a quinol + NAD(+). The enzyme catalyses a quinone + NADPH + H(+) = a quinol + NADP(+). The sequence is that of NAD(P)H dehydrogenase (quinone) from Brucella anthropi (strain ATCC 49188 / DSM 6882 / CCUG 24695 / JCM 21032 / LMG 3331 / NBRC 15819 / NCTC 12168 / Alc 37) (Ochrobactrum anthropi).